Reading from the N-terminus, the 374-residue chain is 5-hydroxytryptamine receptor 1D (374 aa).

Over 1-35 the chain is Extracellular; the sequence is MSPPNQSLEGLPQEASNRSLNVTGAWDPEVLQALR. 3 N-linked (GlcNAc...) asparagine glycosylation sites follow: Asn-5, Asn-17, and Asn-21. Residues 36-61 traverse the membrane as a helical segment; it reads ISLVVVLSVITLATVLSNAFVLTTIL. At 62-72 the chain is on the cytoplasmic side; the sequence is LTKKLHTPANY. Residues 73–94 form a helical membrane-spanning segment; the sequence is LIGSLATTDLLVSILVMPISIA. The Extracellular segment spans residues 95 to 106; that stretch reads YTTTRTWNFGQI. The helical transmembrane segment at 107–131 threads the bilayer; that stretch reads LCDIWVSSDITCCTASILHLCVIAL. Cys-108 and Cys-185 form a disulfide bridge. Serotonin-binding residues include Asp-115 and Cys-119. A DRY motif; important for ligand-induced conformation changes motif is present at residues 132 to 134; the sequence is DRY. Topologically, residues 132–151 are cytoplasmic; sequence DRYWAITDALEYSKRRTAGH. A helical membrane pass occupies residues 152 to 173; that stretch reads AAAMIAAVWIISICISIPPLFW. Over 174–191 the chain is Extracellular; it reads RQATAHEEMSDCLVNTSQ. Residues 192 to 215 traverse the membrane as a helical segment; the sequence is ISYTIYSTCGAFYIPSILLIILYG. Over 216 to 297 the chain is Cytoplasmic; the sequence is RIYVAARSRI…ISAARERKAT (82 aa). Residues 298 to 323 form a helical membrane-spanning segment; the sequence is KTLGIILGAFIICWLPFFVVSLVLPI. A serotonin-binding site is contributed by Ser-318. Over 324 to 332 the chain is Extracellular; that stretch reads CRDSCWIHP. A helical transmembrane segment spans residues 333–356; that stretch reads ALFDFFTWLGYLNSLINPVIYTVF. Residues 349–353 carry the NPxxY motif; important for ligand-induced conformation changes and signaling motif; that stretch reads NPVIY. Over 357 to 374 the chain is Cytoplasmic; it reads NEDFRQAFQKVVHFRKIS.

It belongs to the G-protein coupled receptor 1 family. In terms of assembly, homodimer. Heterodimer with HTR1B. Detected in the motor column in spinal cord, and in several cranial motor nuclei, including nucleus ambiguous, oculomotoris, trochelaris and abducens. Detected in gamma motor neurons in the lumbar spinal cord. Detected in proprioceptive sensory neurons in dorsal root ganglia.

It is found in the cell membrane. G-protein coupled receptor for 5-hydroxytryptamine (serotonin). Also functions as a receptor for ergot alkaloid derivatives, various anxiolytic and antidepressant drugs and other psychoactive substances. Ligand binding causes a conformation change that triggers signaling via guanine nucleotide-binding proteins (G proteins) and modulates the activity of downstream effectors, such as adenylate cyclase. HTR1D is coupled to G(i)/G(o) G alpha proteins and mediates inhibitory neurotransmission by inhibiting adenylate cyclase activity. Regulates the release of 5-hydroxytryptamine in the brain, and thereby affects neural activity. May also play a role in regulating the release of other neurotransmitters. May play a role in vasoconstriction. This Mus musculus (Mouse) protein is 5-hydroxytryptamine receptor 1D (Htr1d).